Consider the following 252-residue polypeptide: 5'-nucleotidase SurE (252 aa).

A divalent metal cation is bound by residues Asp8, Asp9, Ser39, and Asn95.

It belongs to the SurE nucleotidase family. Requires a divalent metal cation as cofactor.

Its subcellular location is the cytoplasm. It carries out the reaction a ribonucleoside 5'-phosphate + H2O = a ribonucleoside + phosphate. Functionally, nucleotidase that shows phosphatase activity on nucleoside 5'-monophosphates. The chain is 5'-nucleotidase SurE from Clostridium botulinum (strain ATCC 19397 / Type A).